A 117-amino-acid polypeptide reads, in one-letter code: Serine rich endogenous peptide 5 (117 aa).

Positions 1 to 31 (MATKTSNFVSLRVSLFILLLFISSQVAIADA) are cleaved as a signal peptide. The SCOOP motif motif lies at 41 to 55 (LQIVRRSRSQRGRQY). The segment covering 42–51 (QIVRRSRSQR) has biased composition (basic residues). The tract at residues 42-117 (QIVRRSRSQR…LPYASSPTST (76 aa)) is disordered. The SxS motif essential for MIK2 binding signature appears at 47-49 (SRS). The span at 60 to 84 (LRVPPPPPPPLPQMPSAATPPPMPQ) shows a compositional bias: pro residues.

As to quaternary structure, interacts with MIK2 (via extracellular leucine-rich repeat domain); this interaction triggers the formation of complex between MIK2 and the BAK1/SERK3 and SERK4 coreceptors, and subsequent BAK1 activation by phosphorylation.

Its subcellular location is the cell membrane. It is found in the secreted. The protein resides in the extracellular space. It localises to the apoplast. Functionally, brassicaceae-specific phytocytokine (plant endogenous peptide released into the apoplast) perceived by MIK2 in a BAK1/SERK3 and SERK4 coreceptors-dependent manner, that modulates various physiological and antimicrobial processes including growth prevention and reactive oxygen species (ROS) response regulation. The protein is Serine rich endogenous peptide 5 of Arabidopsis thaliana (Mouse-ear cress).